A 132-amino-acid chain; its full sequence is Small ribosomal subunit protein uS8 (132 aa).

It belongs to the universal ribosomal protein uS8 family. In terms of assembly, part of the 30S ribosomal subunit. Contacts proteins S5 and S12.

Functionally, one of the primary rRNA binding proteins, it binds directly to 16S rRNA central domain where it helps coordinate assembly of the platform of the 30S subunit. The chain is Small ribosomal subunit protein uS8 from Rickettsia felis (strain ATCC VR-1525 / URRWXCal2) (Rickettsia azadi).